A 283-amino-acid chain; its full sequence is Probable aquaporin NIP4-2 (283 aa).

At Met1 the chain carries N-acetylmethionine. Residues 1-21 (MTSHGEEIEDEQISRIEKGNC) show a composition bias toward basic and acidic residues. The segment at 1–23 (MTSHGEEIEDEQISRIEKGNCKD) is disordered. The next 2 membrane-spanning stretches (helical) occupy residues 51–71 (GTYFIIFSGCGVVVVNVLYGG) and 77–97 (GICVTWGLIVMVMIYSTGHIS). The NPA 1 motif lies at 102-104 (NPA). 3 consecutive transmembrane segments (helical) span residues 120–140 (VPLYIGAQLTGSLLASLTLRL), 161–181 (ALVAEIIISFLLMFVISGVAT), and 189–209 (LAGIAVGMTIILNVFVAGPIS). The short motif at 214 to 216 (NPA) is the NPA 2 element. A helical membrane pass occupies residues 231–251 (IWVYIVGPFVGIFAGGFVYNF). Ser267 carries the post-translational modification Phosphoserine.

Belongs to the MIP/aquaporin (TC 1.A.8) family. NIP (TC 1.A.8.12) subfamily.

It is found in the membrane. Aquaporins facilitate the transport of water and small neutral solutes across cell membranes. The protein is Probable aquaporin NIP4-2 (NIP4-2) of Arabidopsis thaliana (Mouse-ear cress).